The chain runs to 160 residues: Globin CTT-II beta (160 aa).

The first 15 residues, 1–15, serve as a signal peptide directing secretion; it reads MKFLVLALCIAAAVA. Residues 17–160 form the Globin domain; the sequence is PLSADEASLV…NVFNMMFSYL (144 aa). Positions 75 and 110 each coordinate heme b.

Belongs to the globin family. In terms of assembly, homodimer.

This is Globin CTT-II beta from Chironomus thummi thummi (Midge).